A 51-amino-acid polypeptide reads, in one-letter code: Astexin-1 (51 aa).

Residues 1–28 (MHTPIISETVQPKTAGLIVLGKASAETR) constitute a propeptide that is removed on maturation. The isoaspartyl glycine isopeptide (Gly-Asp) cross-link spans 29–37 (GLSQGVEPD).

In terms of processing, this lasso peptide is probably hydrolyzed to a linear form by the isopeptidase AtxE1, in vivo.

In terms of biological role, shows weak antimicrobial activity against its phylogenetic relative Caulobacter crescentus. Does not show activity against other bacteria tested (E.coli, Vibrio sp, Burkhoderia thailandensis, and Salmonella newport). The sequence is that of Astexin-1 from Asticcacaulis excentricus (strain ATCC 15261 / DSM 4724 / KCTC 12464 / NCIMB 9791 / VKM B-1370 / CB 48).